The primary structure comprises 777 residues: Ribosome biogenesis protein ERB1 (777 aa).

Residues 1–122 (MAPTAPAKKR…RPNYRVVEDA (122 aa)) are disordered. Acidic residues predominate over residues 36-67 (SEDDSDFVASGDEDEEDEDEDEDEDKDEDDEH). WD repeat units lie at residues 430 to 469 (GHEG…QVWA), 473 to 513 (SSDE…PEVE), 562 to 604 (TVRS…SQIP), 606 to 645 (RKLS…LVKV), 648 to 687 (PGAR…RPYK), 691 to 731 (FHPQ…DLME), and 747 to 777 (VDSL…RLWM).

Belongs to the WD repeat BOP1/ERB1 family. Component of the NOP7 complex, composed of ERB1, NOP7 and YTM1. The complex is held together by ERB1, which interacts with NOP7 via its N-terminal domain and with YTM1 via a high-affinity interaction between the seven-bladed beta-propeller domains of the 2 proteins. The NOP7 complex associates with the 66S pre-ribosome.

The protein localises to the nucleus. Its subcellular location is the nucleolus. It localises to the nucleoplasm. Its function is as follows. Component of the NOP7 complex, which is required for maturation of the 25S and 5.8S ribosomal RNAs and formation of the 60S ribosome. This chain is Ribosome biogenesis protein ERB1, found in Pyricularia oryzae (strain 70-15 / ATCC MYA-4617 / FGSC 8958) (Rice blast fungus).